Here is a 593-residue protein sequence, read N- to C-terminus: UvrABC system protein C (593 aa).

The GIY-YIG domain occupies methionine 17–isoleucine 94. The region spanning lysine 199–leucine 234 is the UVR domain.

It belongs to the UvrC family. In terms of assembly, interacts with UvrB in an incision complex.

The protein localises to the cytoplasm. Functionally, the UvrABC repair system catalyzes the recognition and processing of DNA lesions. UvrC both incises the 5' and 3' sides of the lesion. The N-terminal half is responsible for the 3' incision and the C-terminal half is responsible for the 5' incision. In Staphylococcus aureus (strain MSSA476), this protein is UvrABC system protein C.